The following is an 899-amino-acid chain: ATP-dependent DNA helicase DDX31 (899 aa).

Composition is skewed to basic residues over residues 1–12 (MNKHDQKKKRNK) and 21–31 (KKSKGFIKNKK). The segment at 1–142 (MNKHDQKKKR…SKHKRNVPSK (142 aa)) is disordered. Acidic residues predominate over residues 76 to 85 (NMNDDDDNNM). Over residues 86-102 (NDDYNNNNIKGDYNNNN) the composition is skewed to low complexity. A compositionally biased stretch (acidic residues) spans 106–121 (DDVDDDDYDDDDDDNF). The Q motif signature appears at 173 to 201 (FCDLKYILSESLINTLEKNEFIKMTSIQK). The Helicase ATP-binding domain occupies 204–433 (IPLFFKPNDI…NYCLTNNTMW (230 aa)). 217–224 (SMTGSGKT) contacts ATP. The DEAD box motif lies at 332–335 (DEAD). A compositionally biased stretch (polar residues) spans 463–472 (NRENSPLNIH). Residues 463 to 517 (NRENSPLNIHNNDDNDDNDDNDENNGDNNNNNDDNNNNNDDNNNKNNDDDNNNTY) are disordered. A compositionally biased stretch (acidic residues) spans 476-487 (DNDDNDDNDENN). Low complexity predominate over residues 488–503 (GDNNNNNDDNNNNNDD). Residues 593-782 (KITPVLERED…TIINHFKKFC (190 aa)) enclose the Helicase C-terminal domain.

This sequence belongs to the DEAD box helicase family. DDX31/DBP7 subfamily.

It localises to the nucleus. Its subcellular location is the nucleolus. It catalyses the reaction ATP + H2O = ADP + phosphate + H(+). Its function is as follows. Has DNA helicase activity and may also have RNA helicase activity; the DNA helicase direction was not determined. Shows ssDNA and RNA dependent ATPase activity. The sequence is that of ATP-dependent DNA helicase DDX31 (DDX31) from Plasmodium falciparum (isolate 3D7).